Here is a 620-residue protein sequence, read N- to C-terminus: GTP-binding protein At3g49725, chloroplastic (620 aa).

The transit peptide at 1 to 65 directs the protein to the chloroplast; it reads MSVTTSFGIW…SSFLARDRLR (65 aa). Residues 57–100 form a disordered region; sequence SFLARDRLRSKTPSSSPFSSKRHTPKTSEIEEESTPKDSVLLNP. Residues 346–585 enclose the Hflx-type G domain; the sequence is GTIAVVGYTN…LIDDKMKEKK (240 aa). GTP is bound by residues 352 to 359, 377 to 381, 399 to 402, and 468 to 471; these read GYTNAGKS, FATLD, DTVG, and NKID. Mg(2+) contacts are provided by serine 359 and threonine 379. Acidic residues-rich tracts occupy residues 478 to 497 and 511 to 521; these read EEEK…EDEA and TVDEDQIQNGD. The tract at residues 478–521 is disordered; it reads EEEKYLDDGEGVGEEDEDEADLKAEETVDASEATVDEDQIQNGD. Residue 563–565 participates in GTP binding; it reads SAL. The disordered stretch occupies residues 597–620; the sequence is LHKRKWRPPRNDDEEERLIPLDQR.

Belongs to the TRAFAC class OBG-HflX-like GTPase superfamily. HflX GTPase family. The cofactor is Mg(2+).

Its subcellular location is the plastid. It is found in the chloroplast. The sequence is that of GTP-binding protein At3g49725, chloroplastic from Arabidopsis thaliana (Mouse-ear cress).